The primary structure comprises 253 residues: U2 small nuclear ribonucleoprotein A' (253 aa).

LRR repeat units follow at residues 19–40 (KDRE…GIAK), 41–62 (DQDA…PFFP), 63–84 (RLHT…IAST), and 87–108 (NLTT…DPLR). The 39-residue stretch at 121–159 (NPVTRKEHYRYWVIWRIPSVRFLDYQKVKDAERAKAKEL) folds into the LRRCT domain. The tract at residues 228-253 (ELNEGRIPGGALDAGEDSEDENQMQT) is disordered. A compositionally biased stretch (acidic residues) spans 241–253 (AGEDSEDENQMQT).

Belongs to the U2 small nuclear ribonucleoprotein A family. In terms of assembly, associated with the spliceosome.

It localises to the nucleus. Functionally, involved in pre-mRNA splicing. The protein is U2 small nuclear ribonucleoprotein A' (lea1) of Aspergillus fumigatus (strain ATCC MYA-4609 / CBS 101355 / FGSC A1100 / Af293) (Neosartorya fumigata).